Consider the following 193-residue polypeptide: Putative manganese efflux pump MntP (193 aa).

The next 6 membrane-spanning stretches (helical) occupy residues 6 to 26, 48 to 68, 71 to 91, 108 to 128, 132 to 152, and 165 to 185; these read VIFI…GIAC, AGMV…ISAF, WIAF…ALQG, LLGV…AFAV, NIGL…FLGF, and WVGV…LAEH.

Belongs to the MntP (TC 9.B.29) family.

It is found in the cell membrane. Functionally, probably functions as a manganese efflux pump. The chain is Putative manganese efflux pump MntP from Dehalococcoides mccartyi (strain ATCC BAA-2100 / JCM 16839 / KCTC 5957 / BAV1).